A 1025-amino-acid chain; its full sequence is Multidrug resistance protein MdtC (1025 aa).

12 consecutive transmembrane segments (helical) span residues 3–23 (FFAL…AITL), 333–353 (EVEQ…FLFL), 360–380 (IIPA…MYLC), 387–407 (LSLM…IVVL), 431–451 (VGFT…PLLL), 463–483 (FAVT…TLTP), 528–548 (LVGM…ISIP), 853–873 (VILI…LYES), 875–895 (VHPL…LLAL), 897–917 (LFNA…IGIV), 953–973 (PIMM…LSGG), and 984–1004 (ITIV…TPVV).

Belongs to the resistance-nodulation-cell division (RND) (TC 2.A.6) family. MdtC subfamily. As to quaternary structure, part of a tripartite efflux system composed of MdtA, MdtB and MdtC. MdtC forms a heteromultimer with MdtB.

Its subcellular location is the cell inner membrane. In terms of biological role, the MdtABC tripartite complex confers resistance against novobiocin and deoxycholate. The polypeptide is Multidrug resistance protein MdtC (Escherichia coli O157:H7 (strain EC4115 / EHEC)).